The following is a 255-amino-acid chain: Small ribosomal subunit protein eS1 (255 aa).

A2 bears the N-acetylalanine; partial mark.

Belongs to the eukaryotic ribosomal protein eS1 family. As to quaternary structure, component of the small ribosomal subunit. Mature ribosomes consist of a small (40S) and a large (60S) subunit. The 40S subunit contains about 33 different proteins and 1 molecule of RNA (18S). The 60S subunit contains about 49 different proteins and 3 molecules of RNA (25S, 5.8S and 5S).

It is found in the cytoplasm. The protein is Small ribosomal subunit protein eS1 of Candida glabrata (strain ATCC 2001 / BCRC 20586 / JCM 3761 / NBRC 0622 / NRRL Y-65 / CBS 138) (Yeast).